A 109-amino-acid polypeptide reads, in one-letter code: uncharacterized protein (109 aa).

Residues 29–49 (ITIIITLVIIFIIFTLIILYF) traverse the membrane as a helical segment.

The protein localises to the membrane. This is an uncharacterized protein from Sputnik virophage.